The sequence spans 305 residues: Glycine--tRNA ligase alpha subunit (305 aa).

This sequence belongs to the class-II aminoacyl-tRNA synthetase family. Tetramer of two alpha and two beta subunits.

Its subcellular location is the cytoplasm. The catalysed reaction is tRNA(Gly) + glycine + ATP = glycyl-tRNA(Gly) + AMP + diphosphate. This Streptococcus pneumoniae serotype 19F (strain G54) protein is Glycine--tRNA ligase alpha subunit.